A 120-amino-acid polypeptide reads, in one-letter code: NAD(P)H-quinone oxidoreductase subunit 3, chloroplastic (120 aa).

3 consecutive transmembrane segments (helical) span residues 9–29, 64–84, and 88–108; these read IFWA…LISG, MFAL…PWAM, and VLGV…IVGL.

Belongs to the complex I subunit 3 family. In terms of assembly, NDH is composed of at least 16 different subunits, 5 of which are encoded in the nucleus.

It localises to the plastid. It is found in the chloroplast thylakoid membrane. The catalysed reaction is a plastoquinone + NADH + (n+1) H(+)(in) = a plastoquinol + NAD(+) + n H(+)(out). The enzyme catalyses a plastoquinone + NADPH + (n+1) H(+)(in) = a plastoquinol + NADP(+) + n H(+)(out). Functionally, NDH shuttles electrons from NAD(P)H:plastoquinone, via FMN and iron-sulfur (Fe-S) centers, to quinones in the photosynthetic chain and possibly in a chloroplast respiratory chain. The immediate electron acceptor for the enzyme in this species is believed to be plastoquinone. Couples the redox reaction to proton translocation, and thus conserves the redox energy in a proton gradient. This is NAD(P)H-quinone oxidoreductase subunit 3, chloroplastic from Populus alba (White poplar).